The following is a 606-amino-acid chain: Alpha-1,2-mannosyltransferase MNN23 (606 aa).

Residues Met1–Lys14 lie on the Cytoplasmic side of the membrane. A helical membrane pass occupies residues Ala15–Ile35. At Thr36–Asn606 the chain is on the extracellular side. The tract at residues Asp59–Asn86 is disordered. The span at Glu62 to Gly78 shows a compositional bias: basic and acidic residues.

It belongs to the MNN1/MNT family.

It localises to the golgi apparatus membrane. The protein operates within protein modification; protein glycosylation. In terms of biological role, alpha-1,2-mannosyltransferase required for cell wall integrity. Responsible for addition of the first alpha-1,2-linked mannose to form the branches on the mannan backbone of oligosaccharides. Addition of alpha-1,2-mannose is required for stabilization of the alpha-1,6-mannose backbone and hence regulates mannan fibril length; and is important for both immune recognition and virulence. This is Alpha-1,2-mannosyltransferase MNN23 (MNN23) from Candida albicans (strain SC5314 / ATCC MYA-2876) (Yeast).